The following is a 338-amino-acid chain: Aspartate carbamoyltransferase catalytic subunit (338 aa).

The carbamoyl phosphate site is built by R57 and T58. K86 contributes to the L-aspartate binding site. 3 residues coordinate carbamoyl phosphate: R107, H135, and Q138. L-aspartate contacts are provided by R172 and R234. 2 residues coordinate carbamoyl phosphate: L274 and P275.

It belongs to the aspartate/ornithine carbamoyltransferase superfamily. ATCase family. Heterododecamer (2C3:3R2) of six catalytic PyrB chains organized as two trimers (C3), and six regulatory PyrI chains organized as three dimers (R2).

The enzyme catalyses carbamoyl phosphate + L-aspartate = N-carbamoyl-L-aspartate + phosphate + H(+). The protein operates within pyrimidine metabolism; UMP biosynthesis via de novo pathway; (S)-dihydroorotate from bicarbonate: step 2/3. Its function is as follows. Catalyzes the condensation of carbamoyl phosphate and aspartate to form carbamoyl aspartate and inorganic phosphate, the committed step in the de novo pyrimidine nucleotide biosynthesis pathway. This is Aspartate carbamoyltransferase catalytic subunit from Cellvibrio japonicus (strain Ueda107) (Pseudomonas fluorescens subsp. cellulosa).